The sequence spans 331 residues: MSRPSSAGGAAGGLGAGKAGGSKHGGSGGTTASAAAAAAAAAAAAAAAAAAAGVSGSVAGSGTVPAAAVALPVAALPGQSPELTALFECPVCFDYVLPPILQCQAGHLVCNQCRQKLSCCPTCRGPLTPSIRNLAMEKVASTLPFPCKYSSAGCLLSLHHSEKPEHEEVCEFRPYTCPCPGASCKWQGSLEEVMPHLMHAHKSITTLQGEDIVFLATDINLPGAVDWVMMQSCFGHHFMLVLEKQEKYEGHQQFFAIVLLIGTRKQAENFAYRLELNGNRRRLTWEATPRSIHDGVAAAIMNSDCLVFDTSIAHLFADNGNLGINVTISMC.

The tract at residues 1 to 26 (MSRPSSAGGAAGGLGAGKAGGSKHGG) is disordered. Residues 9-26 (GAAGGLGAGKAGGSKHGG) show a composition bias toward gly residues. An RING-type zinc finger spans residues 89 to 124 (CPVCFDYVLPPILQCQAGHLVCNQCRQKLSCCPTCR). An SBD region spans residues 139–331 (VASTLPFPCK…LGINVTISMC (193 aa)). The SIAH-type zinc finger occupies 142–202 (TLPFPCKYSS…VMPHLMHAHK (61 aa)). The Zn(2+) site is built by C147, C154, H166, C170, C177, C184, H196, and H201.

Belongs to the SINA (Seven in absentia) family. Homodimer. As to expression, in embryos it is expressed in all blastomeres starting at the mid-blastulla. After 20 somite stage, it is expressed mainly in the posterior part. Expressed in brain, including the eye, the cranial cavity, otic vesicle, optic chiasm and in the gut.

It catalyses the reaction S-ubiquitinyl-[E2 ubiquitin-conjugating enzyme]-L-cysteine + [acceptor protein]-L-lysine = [E2 ubiquitin-conjugating enzyme]-L-cysteine + N(6)-ubiquitinyl-[acceptor protein]-L-lysine.. Its pathway is protein modification; protein ubiquitination. E3 ubiquitin-protein ligase that mediates ubiquitination and subsequent proteasomal degradation of target proteins. E3 ubiquitin ligases accept ubiquitin from an E2 ubiquitin-conjugating enzyme in the form of a thioester and then directly transfers the ubiquitin to targeted substrates. It probably triggers the ubiquitin-mediated degradation of different substrates. Induces cellular growth arrest by inhibiting the G2/M transition. May play a role in the regulation of the cellular clock function. The polypeptide is E3 ubiquitin-protein ligase Siah2 (siah2l) (Danio rerio (Zebrafish)).